Reading from the N-terminus, the 668-residue chain is DNA-directed RNA polymerase subunit beta' (668 aa).

Zn(2+)-binding residues include cysteine 71, cysteine 73, cysteine 91, and cysteine 94. Residues aspartate 505, aspartate 507, and aspartate 509 each coordinate Mg(2+).

This sequence belongs to the RNA polymerase beta' chain family. RpoC1 subfamily. As to quaternary structure, in plastids the minimal PEP RNA polymerase catalytic core is composed of four subunits: alpha, beta, beta', and beta''. When a (nuclear-encoded) sigma factor is associated with the core the holoenzyme is formed, which can initiate transcription. Mg(2+) serves as cofactor. Requires Zn(2+) as cofactor.

It localises to the plastid. Its subcellular location is the chloroplast. The catalysed reaction is RNA(n) + a ribonucleoside 5'-triphosphate = RNA(n+1) + diphosphate. Its function is as follows. DNA-dependent RNA polymerase catalyzes the transcription of DNA into RNA using the four ribonucleoside triphosphates as substrates. The sequence is that of DNA-directed RNA polymerase subunit beta' from Mesostigma viride (Green alga).